We begin with the raw amino-acid sequence, 155 residues long: Phosphoprotein pp24 (155 aa).

The disordered stretch occupies residues Met-1–Lys-50. Residues Glu-34 to Lys-50 show a composition bias toward basic and acidic residues. The stretch at Arg-76–Val-107 forms a coiled coil.

This chain is Phosphoprotein pp24 (MDV008), found in Gallus gallus (Chicken).